The sequence spans 602 residues: Myotubularin (602 aa).

A disordered region spans residues 1 to 32; the sequence is MASNSTPKYNSNSLENSLRRSPGDGMNHEQND. Basic and acidic residues predominate over residues 17–31; it reads SLRRSPGDGMNHEQN. The GRAM domain maps to 28–96; the sequence is HEQNDEIPCL…GVIARIEKMG (69 aa). Positions 162-537 constitute a Myotubularin phosphatase domain; that stretch reads GWAVYDAMTE…RHLELWVNYY (376 aa). Positions 287, 312, and 313 each coordinate a 1,2-diacyl-sn-glycero-3-phospho-(1D-myo-inositol-3,5-bisphosphate). The a 1,2-diacyl-sn-glycero-3-phospho-(1D-myo-inositol-3-phosphate) site is built by Asn287, Asn312, and Ile313. Catalysis depends on Cys374, which acts as the Phosphocysteine intermediate. A 1,2-diacyl-sn-glycero-3-phospho-(1D-myo-inositol-3,5-bisphosphate) contacts are provided by Ser375, Asp376, Gly377, Trp378, Asp379, Arg380, Lys416, and Arg420. A 1,2-diacyl-sn-glycero-3-phospho-(1D-myo-inositol-3-phosphate) is bound by residues Ser375, Asp376, Gly377, Trp378, Asp379, and Arg380. Arg420 contributes to the a 1,2-diacyl-sn-glycero-3-phospho-(1D-myo-inositol-3-phosphate) binding site. The disordered stretch occupies residues 574–602; the sequence is QITNSPKMNSSTTSPSSPSQIMPQVHTPF. Residues 583-592 are compositionally biased toward low complexity; sequence SSTTSPSSPS.

It belongs to the protein-tyrosine phosphatase family. Non-receptor class myotubularin subfamily.

The protein localises to the cytoplasm. The protein resides in the cell membrane. It localises to the cell projection. It is found in the filopodium. Its subcellular location is the ruffle. The protein localises to the late endosome. The protein resides in the myofibril. It localises to the sarcomere. It carries out the reaction a 1,2-diacyl-sn-glycero-3-phospho-(1D-myo-inositol-3-phosphate) + H2O = a 1,2-diacyl-sn-glycero-3-phospho-(1D-myo-inositol) + phosphate. The enzyme catalyses a 1,2-diacyl-sn-glycero-3-phospho-(1D-myo-inositol-3,5-bisphosphate) + H2O = a 1,2-diacyl-sn-glycero-3-phospho-(1D-myo-inositol-5-phosphate) + phosphate. It catalyses the reaction 1,2-dioctanoyl-sn-glycero-3-phospho-(1-D-myo-inositol-3-phosphate) + H2O = 1,2-dioctanoyl-sn-glycero-3-phospho-(1D-myo-inositol) + phosphate. The catalysed reaction is 1,2-dioctanoyl-sn-glycero-3-phospho-(1D-myo-inositol-3,5-bisphosphate) + H2O = 1,2-dioctanoyl-sn-glycero-3-phospho-(1D-myo-inositol-5-phosphate) + phosphate. It carries out the reaction 1,2-dihexadecanoyl-sn-glycero-3-phospho-(1D-myo-inositol-3,5-phosphate) + H2O = 1,2-dihexadecanoyl-sn-glycero-3-phospho-(1D-myo-inositol-5-phosphate) + phosphate. Its function is as follows. Lipid phosphatase which dephosphorylates phosphatidylinositol 3-monophosphate (PI3P) and phosphatidylinositol 3,5-bisphosphate (PI(3,5)P2). The polypeptide is Myotubularin (mtm1) (Xenopus tropicalis (Western clawed frog)).